The sequence spans 336 residues: MIEADRLISAGATIAEDVADRAIRPKLLAEYVGQPQVRSQMEIFIQAAKLRGDALDHLLIFGPPGLGKTTLANIVANEMGVNLRTTSGPVLEKAGDLAAMLTNLEPHDVLFIDEIHRLSPVVEEVLYPAMEDYQLDIMIGEGPAARSIKIDLPPFTLIGATTRAGSLTSPLRDRFGIVQRLEFYQVPDLQHIVGRSARHMGLEMSDDGALEVARRARGTPRIANRLLRRVRDFAEVKHDGAISAEIAAQALDMLNVDAEGFDYMDRKLLLAVIDKFFGGPVGLDNLAAAIGEERETIEDVLEPYLIQQGFLQRTPRGRMATVRAWNHFGITPPEMP.

The interval 4 to 184 (ADRLISAGAT…FGIVQRLEFY (181 aa)) is large ATPase domain (RuvB-L). ATP contacts are provided by residues I23, R24, G65, K68, T69, T70, 131-133 (EDY), R174, Y184, and R221. Residue T69 coordinates Mg(2+). Residues 185–255 (QVPDLQHIVG…IAAQALDMLN (71 aa)) are small ATPAse domain (RuvB-S). Residues 258–336 (AEGFDYMDRK…HFGITPPEMP (79 aa)) are head domain (RuvB-H). 3 residues coordinate DNA: R294, R313, and R318.

Belongs to the RuvB family. Homohexamer. Forms an RuvA(8)-RuvB(12)-Holliday junction (HJ) complex. HJ DNA is sandwiched between 2 RuvA tetramers; dsDNA enters through RuvA and exits via RuvB. An RuvB hexamer assembles on each DNA strand where it exits the tetramer. Each RuvB hexamer is contacted by two RuvA subunits (via domain III) on 2 adjacent RuvB subunits; this complex drives branch migration. In the full resolvosome a probable DNA-RuvA(4)-RuvB(12)-RuvC(2) complex forms which resolves the HJ.

The protein localises to the cytoplasm. The catalysed reaction is ATP + H2O = ADP + phosphate + H(+). In terms of biological role, the RuvA-RuvB-RuvC complex processes Holliday junction (HJ) DNA during genetic recombination and DNA repair, while the RuvA-RuvB complex plays an important role in the rescue of blocked DNA replication forks via replication fork reversal (RFR). RuvA specifically binds to HJ cruciform DNA, conferring on it an open structure. The RuvB hexamer acts as an ATP-dependent pump, pulling dsDNA into and through the RuvAB complex. RuvB forms 2 homohexamers on either side of HJ DNA bound by 1 or 2 RuvA tetramers; 4 subunits per hexamer contact DNA at a time. Coordinated motions by a converter formed by DNA-disengaged RuvB subunits stimulates ATP hydrolysis and nucleotide exchange. Immobilization of the converter enables RuvB to convert the ATP-contained energy into a lever motion, pulling 2 nucleotides of DNA out of the RuvA tetramer per ATP hydrolyzed, thus driving DNA branch migration. The RuvB motors rotate together with the DNA substrate, which together with the progressing nucleotide cycle form the mechanistic basis for DNA recombination by continuous HJ branch migration. Branch migration allows RuvC to scan DNA until it finds its consensus sequence, where it cleaves and resolves cruciform DNA. The sequence is that of Holliday junction branch migration complex subunit RuvB from Salmonella choleraesuis (strain SC-B67).